Here is a 145-residue protein sequence, read N- to C-terminus: Transcription antitermination protein NusB (145 aa).

Belongs to the NusB family.

Its function is as follows. Involved in transcription antitermination. Required for transcription of ribosomal RNA (rRNA) genes. Binds specifically to the boxA antiterminator sequence of the ribosomal RNA (rrn) operons. This is Transcription antitermination protein NusB from Burkholderia mallei (strain NCTC 10247).